Reading from the N-terminus, the 82-residue chain is Sulfur carrier protein TusA (82 aa).

The Cysteine persulfide intermediate role is filled by C19.

The protein belongs to the sulfur carrier protein TusA family.

The protein resides in the cytoplasm. Sulfur carrier protein which probably makes part of a sulfur-relay system. The chain is Sulfur carrier protein TusA from Tolumonas auensis (strain DSM 9187 / NBRC 110442 / TA 4).